A 205-amino-acid polypeptide reads, in one-letter code: Troponin I, cardiac muscle (205 aa).

The tract at residues 1 to 38 is disordered; sequence MADQSGNAAPPPVRRRSSANYRAYATEPHAKKKSKISA. N-acetylalanine is present on Ala2. Ser5 carries the post-translational modification Phosphoserine. Residues Ser17 and Ser18 each carry the phosphoserine; by PKA and PKD/PRKD1 modification. A Phosphotyrosine modification is found at Tyr21. A Phosphothreonine; by STK4/MST1 modification is found at Thr26. The tract at residues 27–74 is involved in binding TNC; sequence EPHAKKKSKISASRKLQLKTLMLQIAKQELEREAVERRGEKGRALSTR. Ser37 and Ser39 each carry phosphoserine; by PKC/PRKCE. Thr46 bears the Phosphothreonine; by STK4/MST1 mark. At Ser72 the chain carries Phosphoserine. The residue at position 73 (Thr73) is a Phosphothreonine. Positions 124–145 are involved in binding TNC and actin; that stretch reads NQKIFDLRGKFKRPTLRRVRIS. Thr138 carries the phosphothreonine; by STK4/MST1 modification. Residue Ser145 is modified to Phosphoserine; by PAK3. At Thr176 the chain carries Phosphothreonine. A Phosphoserine modification is found at Ser194.

The protein belongs to the troponin I family. Binds to actin and tropomyosin. Interacts with TRIM63. Interacts with STK4/MST1. In terms of processing, phosphorylated at Ser-17 and Ser-18 by PRKD1; phosphorylation reduces myofilament calcium sensitivity. Phosphorylated preferentially at Thr-26. Phosphorylation by STK4/MST1 alters its binding affinity to TNNC1 (cardiac Tn-C) and TNNT2 (cardiac Tn-T). Phosphorylated at Ser-37 and Ser-39 by PRKCE; phosphorylation increases myocardium contractile dysfunction.

Its function is as follows. Troponin I is the inhibitory subunit of troponin, the thin filament regulatory complex which confers calcium-sensitivity to striated muscle actomyosin ATPase activity. The chain is Troponin I, cardiac muscle (TNNI3) from Equus caballus (Horse).